Reading from the N-terminus, the 305-residue chain is Tyrosine recombinase XerC (305 aa).

The Core-binding (CB) domain occupies 4–95 (TQIQELIIKW…AIKNFYKFLE (92 aa)). The Tyr recombinase domain occupies 116–298 (LLPKALSEEE…SIKHLETAYV (183 aa)). Catalysis depends on residues R159, K182, H250, R253, and H276. Residue Y285 is the O-(3'-phospho-DNA)-tyrosine intermediate of the active site.

The protein belongs to the 'phage' integrase family. XerC subfamily. Forms a cyclic heterotetrameric complex composed of two molecules of XerC and two molecules of XerD.

It is found in the cytoplasm. Site-specific tyrosine recombinase, which acts by catalyzing the cutting and rejoining of the recombining DNA molecules. The XerC-XerD complex is essential to convert dimers of the bacterial chromosome into monomers to permit their segregation at cell division. It also contributes to the segregational stability of plasmids. In Rickettsia bellii (strain OSU 85-389), this protein is Tyrosine recombinase XerC.